The following is a 20-amino-acid chain: Hemocyanin subunit II (20 aa).

The interval 1-20 (DVVASSTAHKQQDINHLLDK) is disordered. Residues 10 to 20 (KQQDINHLLDK) are compositionally biased toward basic and acidic residues.

The protein belongs to the tyrosinase family. Hemocyanin subfamily. In terms of assembly, composed of 3 major subunits (IB, II and III) and 1 minor subunit (IA) which form homohexamers and heterohexamers. May also form larger structures. Hemolymph.

Its subcellular location is the secreted. It is found in the extracellular space. Its function is as follows. Hemocyanins are copper-containing oxygen carriers occurring freely dissolved in the hemolymph of many mollusks and arthropods. This chain is Hemocyanin subunit II, found in Panulirus japonicus (Japanese spiny lobster).